Consider the following 393-residue polypeptide: CCA-adding enzyme (393 aa).

The ATP site is built by Gly-27 and Arg-30. Gly-27 and Arg-30 together coordinate CTP. Residues Asp-40 and Asp-42 each coordinate Mg(2+). Residues Arg-111, Asp-154, Arg-157, Arg-160, and Arg-163 each coordinate ATP. Residues Arg-111, Asp-154, Arg-157, Arg-160, and Arg-163 each coordinate CTP.

Belongs to the tRNA nucleotidyltransferase/poly(A) polymerase family. Bacterial CCA-adding enzyme type 3 subfamily. As to quaternary structure, homodimer. Mg(2+) serves as cofactor.

The enzyme catalyses a tRNA precursor + 2 CTP + ATP = a tRNA with a 3' CCA end + 3 diphosphate. It catalyses the reaction a tRNA with a 3' CCA end + 2 CTP + ATP = a tRNA with a 3' CCACCA end + 3 diphosphate. Catalyzes the addition and repair of the essential 3'-terminal CCA sequence in tRNAs without using a nucleic acid template. Adds these three nucleotides in the order of C, C, and A to the tRNA nucleotide-73, using CTP and ATP as substrates and producing inorganic pyrophosphate. tRNA 3'-terminal CCA addition is required both for tRNA processing and repair. Also involved in tRNA surveillance by mediating tandem CCA addition to generate a CCACCA at the 3' terminus of unstable tRNAs. While stable tRNAs receive only 3'-terminal CCA, unstable tRNAs are marked with CCACCA and rapidly degraded. This is CCA-adding enzyme from Listeria monocytogenes serovar 1/2a (strain ATCC BAA-679 / EGD-e).